A 257-amino-acid polypeptide reads, in one-letter code: Protein YIPF5 (257 aa).

Topologically, residues methionine 1–glutamate 124 are cytoplasmic. The interaction with Sec23 stretch occupies residues proline 75 to lysine 106. A helical transmembrane segment spans residues threonine 125–glycine 145. Residue lysine 146 is a topological domain, lumenal. Residues isoleucine 147–leucine 167 traverse the membrane as a helical segment. The Cytoplasmic portion of the chain corresponds to asparagine 168–threonine 173. A helical transmembrane segment spans residues glycine 174 to leucine 194. Residues serine 195–serine 196 lie on the Lumenal side of the membrane. Residues phenylalanine 197 to glycine 217 traverse the membrane as a helical segment. Topologically, residues tryptophan 218 to glutamine 236 are cytoplasmic. A helical membrane pass occupies residues glutamine 237–phenylalanine 257.

The protein belongs to the YIP1 family. Interacts with the COPII coat components Sec23 (SEC23A and/or SEC23B) and Sec24 (SEC24A and/or SEC24B). Interacts with YIF1A. May interact with RAB1A. Interacts with YIPF3 and YIPF4. Ubiquitously expressed with abundant expression in pancreatic tissue, islets, beta cells, and brain. Highly expressed in coronary smooth muscles.

The protein localises to the endoplasmic reticulum membrane. It localises to the golgi apparatus. Its subcellular location is the cis-Golgi network membrane. It is found in the cytoplasmic vesicle. The protein resides in the COPII-coated vesicle. Its function is as follows. Plays a role in transport between endoplasmic reticulum and Golgi. In pancreatic beta cells, required to transport proinsulin from endoplasmic reticulum into the Golgi. This chain is Protein YIPF5, found in Homo sapiens (Human).